The sequence spans 24 residues: uncharacterized protein (24 aa).

Over 1 to 3 the chain is Cytoplasmic; that stretch reads MKK. Residues 4–24 form a helical membrane-spanning segment; sequence TTIIMMGVAIIVVLGTELGWW.

The protein localises to the cell inner membrane. This is an uncharacterized protein from Escherichia coli (strain K12).